We begin with the raw amino-acid sequence, 182 residues long: Lipoprotein signal peptidase (182 aa).

3 consecutive transmembrane segments (helical) span residues 21–41 (LLLS…VLAV), 74–94 (GYTW…FWMG), and 98–118 (VSPW…GNLV). Residues aspartate 134 and aspartate 148 contribute to the active site. Residues 146–166 (VADPSVVGGAILLVVLSIFGY) form a helical membrane-spanning segment.

It belongs to the peptidase A8 family.

It localises to the cell membrane. The catalysed reaction is Release of signal peptides from bacterial membrane prolipoproteins. Hydrolyzes -Xaa-Yaa-Zaa-|-(S,diacylglyceryl)Cys-, in which Xaa is hydrophobic (preferably Leu), and Yaa (Ala or Ser) and Zaa (Gly or Ala) have small, neutral side chains.. It participates in protein modification; lipoprotein biosynthesis (signal peptide cleavage). This protein specifically catalyzes the removal of signal peptides from prolipoproteins. This is Lipoprotein signal peptidase from Mycobacterium avium (strain 104).